The chain runs to 479 residues: FAD-dependent monooxygenase ausM (479 aa).

Residues E40, G54, and R113 each coordinate FAD. Residue Y224 is part of the active site. An N-linked (GlcNAc...) asparagine glycan is attached at N289. Residues D316 and A329 each coordinate FAD. A helical membrane pass occupies residues 449-469; it reads TLPWLVISLPVLASMLCYLVY.

This sequence belongs to the paxM FAD-dependent monooxygenase family. It depends on FAD as a cofactor.

The protein localises to the membrane. It participates in secondary metabolite biosynthesis; terpenoid biosynthesis. FAD-dependent monooxygenase; part of the gene cluster B that mediates the biosynthesis of austinol and dehydroaustinol, two fungal meroterpenoids. The first step of the pathway is the synthesis of 3,5-dimethylorsellinic acid by the polyketide synthase ausA. 3,5-dimethylorsellinic acid is then prenylated by the polyprenyl transferase ausN. Further epoxidation by the FAD-dependent monooxygenase ausM and cyclization by the probable terpene cyclase ausL lead to the formation of protoaustinoid A. Protoaustinoid A is then oxidized to spiro-lactone preaustinoid A3 by the combined action of the FAD-binding monooxygenases ausB and ausC, and the dioxygenase ausE. Acid-catalyzed keto-rearrangement and ring contraction of the tetraketide portion of preaustinoid A3 by ausJ lead to the formation of preaustinoid A4. The aldo-keto reductase ausK, with the help of ausH, is involved in the next step by transforming preaustinoid A4 into isoaustinone which is in turn hydroxylated by the P450 monooxygenase ausI to form austinolide. Finally, the cytochrome P450 monooxygenase ausG modifies austinolide to austinol. Austinol can be further modified to dehydroaustinol which forms a diffusible complex with diorcinol that initiates conidiation. Due to genetic rearrangements of the clusters and the subsequent loss of some enzymes, the end products of the Emericella nidulans austinoid biosynthesis clusters are austinol and dehydroaustinol, even if additional enzymes, such as the O-acetyltransferase ausQ and the cytochrome P450 monooxygenase ausR are still functional. The sequence is that of FAD-dependent monooxygenase ausM from Emericella nidulans (strain FGSC A4 / ATCC 38163 / CBS 112.46 / NRRL 194 / M139) (Aspergillus nidulans).